Reading from the N-terminus, the 582-residue chain is TRAF-type zinc finger domain-containing protein 1 (582 aa).

Position 2 is an N-acetylalanine (alanine 2). Residues 27–103 (IHEIHCQRNI…DLELSILKLK (77 aa)) form a TRAF-type zinc finger. Serine 191 bears the Phosphoserine mark. Positions 217–236 (EQERQERNRGQQPPKEGGEE) are disordered. 8 positions are modified to phosphoserine: serine 278, serine 320, serine 326, serine 327, serine 409, serine 415, serine 430, and serine 470. The tract at residues 401–582 (TEGIPRLDSQ…AGDAEEEEEE (182 aa)) is disordered. Composition is skewed to polar residues over residues 454–471 (PINN…STSG) and 486–495 (LSNSDSQDIQ).

In terms of assembly, interacts with MAVS, TICAM1, TRAF1, TRAF2, TRAF3. Interacts with TRAF6.

Negative feedback regulator that controls excessive innate immune responses. Regulates both Toll-like receptor 4 (TLR4) and DDX58/RIG1-like helicases (RLH) pathways. May inhibit the LTR pathway by direct interaction with TRAF6 and attenuation of NF-kappa-B activation. May negatively regulate the RLH pathway downstream from MAVS and upstream of NF-kappa-B and IRF3. This Homo sapiens (Human) protein is TRAF-type zinc finger domain-containing protein 1 (TRAFD1).